The following is a 303-amino-acid chain: Mitochondrial carrier homolog 2 (303 aa).

At Ala-2 the chain carries N-acetylalanine. Topologically, residues Ala-2–Thr-15 are mitochondrial intermembrane. Solcar repeat units follow at residues Ala-2 to Ser-98 and Asp-118 to Tyr-206. A helical membrane pass occupies residues Ile-16–Pro-36. Topologically, residues Pro-37–Arg-77 are cytoplasmic. Residues Leu-78–Leu-92 traverse the membrane as a helical segment. The Mitochondrial intermembrane portion of the chain corresponds to Gln-93–Thr-135. The chain crosses the membrane as a helical span at residues Leu-136 to Glu-156. Over Ser-157 to Ala-180 the chain is Cytoplasmic. The helical transmembrane segment at Gly-181 to Leu-199 threads the bilayer. The Mitochondrial intermembrane segment spans residues Ala-200–Ser-231. The chain crosses the membrane as a helical span at residues Met-232 to Ala-252. The Cytoplasmic segment spans residues Gly-253–Arg-280. The helical transmembrane segment at Gly-281–Ile-303 threads the bilayer.

The protein belongs to the mitochondrial carrier (TC 2.A.29) family. In terms of assembly, interacts with p15BID. In terms of tissue distribution, expressed in a wide variety of tissues. Predominant expressed in liver, kidney, heart, skeletal muscle and testis.

The protein resides in the mitochondrion outer membrane. Protein insertase that mediates insertion of transmembrane proteins into the mitochondrial outer membrane. Catalyzes insertion of proteins with alpha-helical transmembrane regions, such as signal-anchored, tail-anchored and multi-pass membrane proteins. Does not mediate insertion of beta-barrel transmembrane proteins. Also acts as a receptor for the truncated form of pro-apoptotic BH3-interacting domain death agonist (p15 BID) and has therefore a critical function in apoptosis. Regulates the quiescence/cycling of hematopoietic stem cells (HSCs). Acts as a regulator of mitochondrial fusion, essential for the naive-to-primed interconversion of embryonic stem cells (ESCs). Acts as a regulator of lipid homeostasis and has a regulatory role in adipocyte differentiation and biology. The protein is Mitochondrial carrier homolog 2 of Mus musculus (Mouse).